The primary structure comprises 301 residues: Protein RESTRICTED TEV MOVEMENT 3 (301 aa).

An MATH domain is found at 6–134; that stretch reads DKKITWTIKN…NGELKIVVEI (129 aa). Residues 235–289 adopt a coiled-coil conformation; that stretch reads KLDWLEKKLYEVSEKKENEEASETGLQEMEEELKDMKQKCLEMEALVEKEKAKVS.

In terms of assembly, self-interacts. Interacts with RTM1.

In terms of biological role, required for the restriction of long-distance movement of the pathogenic tobacco etch virus (TEV) without causing a hypersensitive response or inducing systemic acquired resistance. This chain is Protein RESTRICTED TEV MOVEMENT 3 (RTM3), found in Arabidopsis thaliana (Mouse-ear cress).